Consider the following 93-residue polypeptide: Putative regulatory protein Fnod_1678 (93 aa).

It belongs to the RemA family.

This is Putative regulatory protein Fnod_1678 from Fervidobacterium nodosum (strain ATCC 35602 / DSM 5306 / Rt17-B1).